Consider the following 117-residue polypeptide: MIYGIGIDLIEIERIKNLQNQTKFIERILTIEERDKLNQYTHEQRRLEFLAGRFTVKEAFSKALGTGLGKSVSFQDINCYNDALGKPCIDYPGFYTHVSITHTENYAMSQVILEKNE.

Mg(2+)-binding residues include Asp-8 and Glu-58.

It belongs to the P-Pant transferase superfamily. AcpS family. It depends on Mg(2+) as a cofactor.

Its subcellular location is the cytoplasm. The catalysed reaction is apo-[ACP] + CoA = holo-[ACP] + adenosine 3',5'-bisphosphate + H(+). Its function is as follows. Transfers the 4'-phosphopantetheine moiety from coenzyme A to a Ser of acyl-carrier-protein. The protein is Holo-[acyl-carrier-protein] synthase of Staphylococcus epidermidis (strain ATCC 35984 / DSM 28319 / BCRC 17069 / CCUG 31568 / BM 3577 / RP62A).